The sequence spans 287 residues: tRNA-cytidine(32) 2-sulfurtransferase (287 aa).

A PP-loop motif motif is present at residues Ser58 to Ser63. 3 residues coordinate [4Fe-4S] cluster: Cys133, Cys136, and Cys224.

This sequence belongs to the TtcA family. Homodimer. Mg(2+) serves as cofactor. [4Fe-4S] cluster is required as a cofactor.

Its subcellular location is the cytoplasm. It carries out the reaction cytidine(32) in tRNA + S-sulfanyl-L-cysteinyl-[cysteine desulfurase] + AH2 + ATP = 2-thiocytidine(32) in tRNA + L-cysteinyl-[cysteine desulfurase] + A + AMP + diphosphate + H(+). It participates in tRNA modification. Functionally, catalyzes the ATP-dependent 2-thiolation of cytidine in position 32 of tRNA, to form 2-thiocytidine (s(2)C32). The sulfur atoms are provided by the cysteine/cysteine desulfurase (IscS) system. The polypeptide is tRNA-cytidine(32) 2-sulfurtransferase (Dinoroseobacter shibae (strain DSM 16493 / NCIMB 14021 / DFL 12)).